Here is a 493-residue protein sequence, read N- to C-terminus: Bifunctional protein GlmU (493 aa).

A pyrophosphorylase region spans residues 1 to 246 (MTGELDVDGE…SWLVAGINDR (246 aa)). Residues 21 to 24 (LAAG), Lys-35, Gln-88, 93 to 94 (GT), 117 to 119 (SGD), Gly-156, Glu-171, Asn-186, and Asn-244 each bind UDP-N-acetyl-alpha-D-glucosamine. Position 119 (Asp-119) interacts with Mg(2+). Asn-244 lines the Mg(2+) pocket. Residues 247–267 (VQLTAAATELNARIIRRWQLA) form a linker region. The interval 268-493 (GVTIHDPRTT…DGPADDASDA (226 aa)) is N-acetyltransferase. UDP-N-acetyl-alpha-D-glucosamine-binding residues include Arg-349 and Lys-367. His-379 functions as the Proton acceptor in the catalytic mechanism. Residues Tyr-382 and Asn-393 each contribute to the UDP-N-acetyl-alpha-D-glucosamine site. Residues Ala-396, 402 to 403 (NY), Ser-421, and Ala-439 each bind acetyl-CoA. Residues 470 to 493 (RPGTPEARAAVEAADGPADDASDA) form a disordered region.

The protein in the N-terminal section; belongs to the N-acetylglucosamine-1-phosphate uridyltransferase family. In the C-terminal section; belongs to the transferase hexapeptide repeat family. As to quaternary structure, homotrimer. Requires Mg(2+) as cofactor.

The protein resides in the cytoplasm. It carries out the reaction alpha-D-glucosamine 1-phosphate + acetyl-CoA = N-acetyl-alpha-D-glucosamine 1-phosphate + CoA + H(+). The catalysed reaction is N-acetyl-alpha-D-glucosamine 1-phosphate + UTP + H(+) = UDP-N-acetyl-alpha-D-glucosamine + diphosphate. It functions in the pathway nucleotide-sugar biosynthesis; UDP-N-acetyl-alpha-D-glucosamine biosynthesis; N-acetyl-alpha-D-glucosamine 1-phosphate from alpha-D-glucosamine 6-phosphate (route II): step 2/2. Its pathway is nucleotide-sugar biosynthesis; UDP-N-acetyl-alpha-D-glucosamine biosynthesis; UDP-N-acetyl-alpha-D-glucosamine from N-acetyl-alpha-D-glucosamine 1-phosphate: step 1/1. It participates in bacterial outer membrane biogenesis; LPS lipid A biosynthesis. Its function is as follows. Catalyzes the last two sequential reactions in the de novo biosynthetic pathway for UDP-N-acetylglucosamine (UDP-GlcNAc). The C-terminal domain catalyzes the transfer of acetyl group from acetyl coenzyme A to glucosamine-1-phosphate (GlcN-1-P) to produce N-acetylglucosamine-1-phosphate (GlcNAc-1-P), which is converted into UDP-GlcNAc by the transfer of uridine 5-monophosphate (from uridine 5-triphosphate), a reaction catalyzed by the N-terminal domain. This Clavibacter sepedonicus (Clavibacter michiganensis subsp. sepedonicus) protein is Bifunctional protein GlmU.